A 151-amino-acid polypeptide reads, in one-letter code: Endoribonuclease YbeY (151 aa).

Zn(2+) contacts are provided by histidine 108, histidine 112, and aspartate 118.

This sequence belongs to the endoribonuclease YbeY family. It depends on Zn(2+) as a cofactor.

Its subcellular location is the cytoplasm. Its function is as follows. Single strand-specific metallo-endoribonuclease involved in late-stage 70S ribosome quality control and in maturation of the 3' terminus of the 16S rRNA. The sequence is that of Endoribonuclease YbeY from Porphyromonas gingivalis (strain ATCC 33277 / DSM 20709 / CIP 103683 / JCM 12257 / NCTC 11834 / 2561).